The primary structure comprises 184 residues: Elongation factor P (184 aa).

It belongs to the elongation factor P family.

It is found in the cytoplasm. It functions in the pathway protein biosynthesis; polypeptide chain elongation. Functionally, involved in peptide bond synthesis. Stimulates efficient translation and peptide-bond synthesis on native or reconstituted 70S ribosomes in vitro. Probably functions indirectly by altering the affinity of the ribosome for aminoacyl-tRNA, thus increasing their reactivity as acceptors for peptidyl transferase. This chain is Elongation factor P, found in Acidovorax ebreus (strain TPSY) (Diaphorobacter sp. (strain TPSY)).